Reading from the N-terminus, the 330-residue chain is Nuclear apoptosis-inducing factor 1 (330 aa).

The tract at residues Met-1–Lys-74 is required for nuclear localization and apoptosis-inducing activity. 3 disordered regions span residues Ala-92–Thr-117, Cys-147–Ser-175, and Asn-309–Gln-330. A compositionally biased stretch (gly residues) spans Glu-95–Thr-108.

It belongs to the NAIF1 family.

It localises to the nucleus. Its function is as follows. Induces apoptosis. This chain is Nuclear apoptosis-inducing factor 1 (NAIF1), found in Gallus gallus (Chicken).